An 850-amino-acid polypeptide reads, in one-letter code: Pentatricopeptide repeat-containing protein At5g16860 (850 aa).

PPR repeat units lie at residues 58 to 88, 91 to 125, 126 to 160, 161 to 191, 192 to 227, 228 to 262, 263 to 293, 294 to 328, 329 to 363, 364 to 398, 406 to 436, 439 to 473, 476 to 510, 512 to 542, 543 to 577, 578 to 608, and 614 to 644; these read TLNL…FPPS, GVYH…SWTP, DNYT…GFIS, NVFV…MSVW, DVVS…GCRP, DNIT…EMIQ, NMFV…MSVK, DVVS…KIKM, DVVT…GIKP, NEVT…PIDL, ENMV…LSPK, DVVT…DCQT, NAFT…QQNA, PLFV…MMAK, NEVT…GFKL, DGVT…MKTV, and GPEH…MPME. A type E motif region spans residues 649 to 724; sequence VWVAFLSCCR…RPGCSWVEGI (76 aa). Residues 725 to 755 form a type E(+) motif region; sequence KGTTTFFVGDKTHPHAKEIYQVLLDHMQRIK. Residues 756-850 are type DYW motif; the sequence is DIGYVPETGF…NGSCSCKGYW (95 aa).

This sequence belongs to the PPR family. PCMP-H subfamily.

This is Pentatricopeptide repeat-containing protein At5g16860 (PCMP-H92) from Arabidopsis thaliana (Mouse-ear cress).